The sequence spans 163 residues: uncharacterized protein (163 aa).

Residues 128–163 (PKKEKIKKAKRKKKGAKRASKKQKAKSKSARKSRRV) form a disordered region. Residues 129 to 163 (KKEKIKKAKRKKKGAKRASKKQKAKSKSARKSRRV) are compositionally biased toward basic residues.

This is an uncharacterized protein from Sulfurisphaera tokodaii (strain DSM 16993 / JCM 10545 / NBRC 100140 / 7) (Sulfolobus tokodaii).